The chain runs to 319 residues: Homoserine dehydrogenase (319 aa).

NADPH contacts are provided by phenylalanine 10, threonine 12, valine 13, arginine 40, lysine 57, serine 92, serine 93, serine 114, and lysine 116. Valine 13 serves as a coordination point for NAD(+). The NADP(+) site is built by valine 13 and arginine 40. NAD(+) is bound at residue serine 92. Residue serine 92 coordinates NADP(+). Serine 114 and lysine 116 together coordinate NADP(+). 4 residues coordinate Na(+): glutamate 140, valine 143, alanine 145, and threonine 147. NADP(+)-binding residues include glycine 197 and glutamate 200. The L-homoserine site is built by glutamate 200 and aspartate 211. Lysine 215 (proton donor) is an active-site residue. Glycine 296 lines the NADPH pocket. Residue glycine 296 coordinates NAD(+). Glycine 296 is an NADP(+) binding site.

The protein belongs to the homoserine dehydrogenase family. As to quaternary structure, homodimer. A metal cation is required as a cofactor.

It carries out the reaction L-homoserine + NAD(+) = L-aspartate 4-semialdehyde + NADH + H(+). The protein operates within amino-acid biosynthesis; L-methionine biosynthesis via de novo pathway; L-homoserine from L-aspartate: step 3/3. It participates in amino-acid biosynthesis; L-threonine biosynthesis; L-threonine from L-aspartate: step 3/5. Functionally, catalyzes the conversion of L-aspartate-beta-semialdehyde (L-Asa) to L-homoserine (L-Hse), the third step in the biosynthesis of threonine and methionine from aspartate. Utilizes NADH but not NADPH as coenzyme. The protein is Homoserine dehydrogenase of Pyrococcus horikoshii (strain ATCC 700860 / DSM 12428 / JCM 9974 / NBRC 100139 / OT-3).